Consider the following 504-residue polypeptide: Xanthotoxol synthase (504 aa).

Residues 3 to 23 form a helical membrane-spanning segment; the sequence is PAAIFLILAIPIASVYLLFYH. The tract at residues 363–368 is substrate specificity; the sequence is PGPLLI. Cys444 provides a ligand contact to heme.

Belongs to the cytochrome P450 family. The cofactor is heme.

The protein localises to the microsome membrane. The enzyme catalyses psoralen + reduced [NADPH--hemoprotein reductase] + O2 = xanthotoxol + oxidized [NADPH--hemoprotein reductase] + H2O + H(+). It catalyses the reaction 6-methoxycoumarin + reduced [NADPH--hemoprotein reductase] + O2 = scopoletin + oxidized [NADPH--hemoprotein reductase] + H2O + H(+). Its pathway is secondary metabolite biosynthesis. Functionally, involved in the biosynthesis of coumarins and furanocoumarins (FCs), natural products required for defense responses against attacks by predators with potential medical and agroindustrial usages such as anticoagulant, rodenticide and artificial vanilla substitutes. Catalyzes the conversion of psoralen into xanthotoxol and of 6-methoxycoumarin into scopoletin. Can also convert with a lower efficiency scopoletin into fraxetin and 7-methoxycoumarin into daphnetin-7-methylether, and use 7-methoxy-3-methylcoumarin as substrate. This Pastinaca sativa (Wild parsnip) protein is Xanthotoxol synthase.